The sequence spans 242 residues: 3-deoxy-manno-octulosonate cytidylyltransferase (242 aa).

This sequence belongs to the KdsB family.

The protein localises to the cytoplasm. The enzyme catalyses 3-deoxy-alpha-D-manno-oct-2-ulosonate + CTP = CMP-3-deoxy-beta-D-manno-octulosonate + diphosphate. Its pathway is nucleotide-sugar biosynthesis; CMP-3-deoxy-D-manno-octulosonate biosynthesis; CMP-3-deoxy-D-manno-octulosonate from 3-deoxy-D-manno-octulosonate and CTP: step 1/1. The protein operates within bacterial outer membrane biogenesis; lipopolysaccharide biosynthesis. Its function is as follows. Activates KDO (a required 8-carbon sugar) for incorporation into bacterial lipopolysaccharide in Gram-negative bacteria. The sequence is that of 3-deoxy-manno-octulosonate cytidylyltransferase from Mesorhizobium japonicum (strain LMG 29417 / CECT 9101 / MAFF 303099) (Mesorhizobium loti (strain MAFF 303099)).